We begin with the raw amino-acid sequence, 257 residues long: Ribonuclease HII (257 aa).

Residues 72 to 257 (ERVAGIDEVG…FSPVQKILQA (186 aa)) form the RNase H type-2 domain. The a divalent metal cation site is built by D78, E79, and D170.

It belongs to the RNase HII family. Mn(2+) serves as cofactor. It depends on Mg(2+) as a cofactor.

It is found in the cytoplasm. It carries out the reaction Endonucleolytic cleavage to 5'-phosphomonoester.. Endonuclease that specifically degrades the RNA of RNA-DNA hybrids. The sequence is that of Ribonuclease HII from Levilactobacillus brevis (strain ATCC 367 / BCRC 12310 / CIP 105137 / JCM 1170 / LMG 11437 / NCIMB 947 / NCTC 947) (Lactobacillus brevis).